A 456-amino-acid polypeptide reads, in one-letter code: Tyrosinase-like protein (456 aa).

Residues 1-22 (MNTMTLLGKVFLLQFLIGVGFC) form the signal peptide. Cu cation is bound by residues H145, H154, H163, H295, H299, and H322.

The protein belongs to the tyrosinase family. It depends on Cu(2+) as a cofactor. Prismatic layer of shell (at protein level).

It localises to the secreted. The protein is Tyrosinase-like protein of Pinctada maxima (Silver-lipped pearl oyster).